Here is a 289-residue protein sequence, read N- to C-terminus: ATP synthase gamma chain (289 aa).

Belongs to the ATPase gamma chain family. As to quaternary structure, F-type ATPases have 2 components, CF(1) - the catalytic core - and CF(0) - the membrane proton channel. CF(1) has five subunits: alpha(3), beta(3), gamma(1), delta(1), epsilon(1). CF(0) has three main subunits: a, b and c.

Its subcellular location is the cell inner membrane. Produces ATP from ADP in the presence of a proton gradient across the membrane. The gamma chain is believed to be important in regulating ATPase activity and the flow of protons through the CF(0) complex. The polypeptide is ATP synthase gamma chain (Acinetobacter baylyi (strain ATCC 33305 / BD413 / ADP1)).